The following is a 438-amino-acid chain: Actin-like protein 7A (438 aa).

Residues 36–56 (ASLKDGPAKRAVWVRRDHSEP) form a required for interaction with TES region.

The protein belongs to the actin family. In terms of assembly, interacts (via N-terminus) with TES (via LIM domain 2). Heterodimer with TES; the heterodimer interacts with ENAH to form a heterotrimer. Interacts with ACTL9. Interacts with CYLC1; the interaction may be relevant for proper acrosome attachment to the nuclear envelope.

It is found in the cytoplasm. The protein resides in the cytoskeleton. The protein localises to the golgi apparatus. It localises to the nucleus. Its function is as follows. Essential for normal spermatogenesis and male fertility. Required for normal sperm head morphology, acroplaxome formation, acrosome attachment, and acrosome granule stability. May anchor and stabilize acrosomal adherence to the acroplaxome at least in part by facilitating the presence of F-actin in the subacrosomal space. May play an important role in formation and fusion of Golgi-derived vesicles during acrosome biogenesis. This Bos taurus (Bovine) protein is Actin-like protein 7A (ACTL7A).